Here is a 245-residue protein sequence, read N- to C-terminus: tRNA (guanine-N(7)-)-methyltransferase (245 aa).

4 residues coordinate S-adenosyl-L-methionine: glutamate 75, glutamate 100, aspartate 127, and aspartate 150. The active site involves aspartate 150. Residues lysine 154, aspartate 186, and 223–226 (TKFE) each bind substrate.

The protein belongs to the class I-like SAM-binding methyltransferase superfamily. TrmB family.

It carries out the reaction guanosine(46) in tRNA + S-adenosyl-L-methionine = N(7)-methylguanosine(46) in tRNA + S-adenosyl-L-homocysteine. It functions in the pathway tRNA modification; N(7)-methylguanine-tRNA biosynthesis. In terms of biological role, catalyzes the formation of N(7)-methylguanine at position 46 (m7G46) in tRNA. The chain is tRNA (guanine-N(7)-)-methyltransferase from Photobacterium profundum (strain SS9).